Consider the following 531-residue polypeptide: MAGLQRLASHLPVGVMLPHNTTEAPGPHSAKQDSYEQSDSSQQSLKGHLRNNFQKQLLSNKELTLDKVHTHPKWNTKARSYSYPHCTGISHQDAGSDFQGQGNGLFYSSGPQSWYPKANNQDFIPFTKKRVGVDRAYPLKPVVHRKSCSTGESGTDGDQNVYPRPPELREFSSRNFDVRNQVNFSVVDPVLAAMQAEKALANLDRMEWVQIRRLEAAGESLEEEIRRKQILLRGKLKKTEEELRRIQTQKEQAKENENRELQKIIFPRSRVKGNNSNTTHKAVFSPEFDFEEEFSRDKREDETWERSQQNSSPFQLSDYRIQRLKRERLVASNNKIRDRVSEPSMEKFSPPSETPGGALQGSARNSSLSMAPDSSGSSGSTEEPQLGECSHCGRKFLLFRLERHSNICSRMQGSKRKVFDSSRARAKGTELEQYLNWKGPASAKAEPPRKNNWRQKHESFIHTLRQAREVQQVTAKGENRSHLPPILPAENPDYIQCPHCSHHFAPKVAEQHIPKCKTIKNRPPPPRKHYS.

Residues 16 to 45 (MLPHNTTEAPGPHSAKQDSYEQSDSSQQSL) form a disordered region. A compositionally biased stretch (low complexity) spans 35 to 44 (YEQSDSSQQS). Residues 209–264 (VQIRRLEAAGESLEEEIRRKQILLRGKLKKTEEELRRIQTQKEQAKENENRELQKI) are a coiled coil. 2 disordered regions span residues 290–318 (FEEE…QLSD) and 334–387 (NKIR…PQLG). Basic and acidic residues predominate over residues 293–305 (EFSRDKREDETWE). Polar residues predominate over residues 306–315 (RSQQNSSPFQ). The span at 335–345 (KIRDRVSEPSM) shows a compositional bias: basic and acidic residues. The span at 366-380 (SSLSMAPDSSGSSGS) shows a compositional bias: low complexity. C2HC/C3H-type zinc fingers lie at residues 385 to 414 (QLGE…MQGS) and 493 to 522 (DYIQ…IKNR). Positions 389, 392, 404, 408, 497, 500, 512, and 516 each coordinate Zn(2+).

Belongs to the ZC2HC1 family. It depends on Zn(2+) as a cofactor.

This Macaca fascicularis (Crab-eating macaque) protein is Zinc finger C2HC domain-containing protein 1C (ZC2HC1C).